Here is a 327-residue protein sequence, read N- to C-terminus: Zinc transport protein ZntB (327 aa).

The Cytoplasmic segment spans residues 1–273 (MEAIKGSEVN…ARRTYTMSLM (273 aa)). The helical transmembrane segment at 274–294 (AMVFLPSTFLTGLFGVNLGGI) threads the bilayer. The Periplasmic segment spans residues 295–300 (PGGAWH). A helical membrane pass occupies residues 301–321 (FGFSMFCILLVVLIGGVTLWL). Residues 322–327 (HRSKWL) are Cytoplasmic-facing.

This sequence belongs to the CorA metal ion transporter (MIT) (TC 1.A.35) family.

The protein localises to the cell inner membrane. It carries out the reaction Zn(2+)(out) + H(+)(out) = Zn(2+)(in) + H(+)(in). Its function is as follows. Zinc transporter. Acts as a Zn(2+):proton symporter, which likely mediates zinc ion uptake. In Citrobacter koseri (strain ATCC BAA-895 / CDC 4225-83 / SGSC4696), this protein is Zinc transport protein ZntB.